A 296-amino-acid chain; its full sequence is Acetyl-coenzyme A carboxylase carboxyl transferase subunit beta (296 aa).

One can recognise a CoA carboxyltransferase N-terminal domain in the interval 25 to 294; sequence LWIKDPSTGE…NSDAPAPPEA (270 aa).

This sequence belongs to the AccD/PCCB family. Acetyl-CoA carboxylase is a heterohexamer composed of biotin carboxyl carrier protein (AccB), biotin carboxylase (AccC) and two subunits each of ACCase subunit alpha (AccA) and ACCase subunit beta (AccD).

Its subcellular location is the cytoplasm. It catalyses the reaction N(6)-carboxybiotinyl-L-lysyl-[protein] + acetyl-CoA = N(6)-biotinyl-L-lysyl-[protein] + malonyl-CoA. The protein operates within lipid metabolism; malonyl-CoA biosynthesis; malonyl-CoA from acetyl-CoA: step 1/1. In terms of biological role, component of the acetyl coenzyme A carboxylase (ACC) complex. Biotin carboxylase (BC) catalyzes the carboxylation of biotin on its carrier protein (BCCP) and then the CO(2) group is transferred by the transcarboxylase to acetyl-CoA to form malonyl-CoA. In Brucella ovis (strain ATCC 25840 / 63/290 / NCTC 10512), this protein is Acetyl-coenzyme A carboxylase carboxyl transferase subunit beta.